The following is a 430-amino-acid chain: Gamma-glutamyl phosphate reductase (430 aa).

Belongs to the gamma-glutamyl phosphate reductase family.

The protein localises to the cytoplasm. It carries out the reaction L-glutamate 5-semialdehyde + phosphate + NADP(+) = L-glutamyl 5-phosphate + NADPH + H(+). Its pathway is amino-acid biosynthesis; L-proline biosynthesis; L-glutamate 5-semialdehyde from L-glutamate: step 2/2. In terms of biological role, catalyzes the NADPH-dependent reduction of L-glutamate 5-phosphate into L-glutamate 5-semialdehyde and phosphate. The product spontaneously undergoes cyclization to form 1-pyrroline-5-carboxylate. The chain is Gamma-glutamyl phosphate reductase from Psychrobacter arcticus (strain DSM 17307 / VKM B-2377 / 273-4).